We begin with the raw amino-acid sequence, 181 residues long: Lysozyme B (181 aa).

A signal peptide spans 1 to 19 (MRISFFLLILAVIIGYAYG). Positions 139–181 (LTDSRPLGPFNVTEEEKAQLFIDHEIAMAQCEAEKTCNGFDLE) are excised as a propeptide.

Belongs to the dictyostelium lysozyme family. In terms of processing, contains six disulfide bonds.

Its subcellular location is the cytoplasmic vesicle lumen. The enzyme catalyses Hydrolysis of (1-&gt;4)-beta-linkages between N-acetylmuramic acid and N-acetyl-D-glucosamine residues in a peptidoglycan and between N-acetyl-D-glucosamine residues in chitodextrins.. In terms of biological role, has antibacterial activity. The polypeptide is Lysozyme B (alyB) (Dictyostelium discoideum (Social amoeba)).